The chain runs to 225 residues: Uridylate kinase (225 aa).

9–10 (GS) is an ATP binding site. Position 46 (Gly46) interacts with UMP. Residues Gly47 and Arg51 each coordinate ATP. UMP-binding positions include Asp67 and 115–121 (THPAHTT). 4 residues coordinate ATP: Thr141, Asn142, Tyr147, and Asp150.

The protein belongs to the UMP kinase family. In terms of assembly, homohexamer.

Its subcellular location is the cytoplasm. It catalyses the reaction UMP + ATP = UDP + ADP. The protein operates within pyrimidine metabolism; CTP biosynthesis via de novo pathway; UDP from UMP (UMPK route): step 1/1. With respect to regulation, inhibited by UTP. Its function is as follows. Catalyzes the reversible phosphorylation of UMP to UDP. This chain is Uridylate kinase, found in Methanococcus aeolicus (strain ATCC BAA-1280 / DSM 17508 / OCM 812 / Nankai-3).